Reading from the N-terminus, the 236-residue chain is Phosphoribosylaminoimidazole-succinocarboxamide synthase (236 aa).

This sequence belongs to the SAICAR synthetase family.

The catalysed reaction is 5-amino-1-(5-phospho-D-ribosyl)imidazole-4-carboxylate + L-aspartate + ATP = (2S)-2-[5-amino-1-(5-phospho-beta-D-ribosyl)imidazole-4-carboxamido]succinate + ADP + phosphate + 2 H(+). Its pathway is purine metabolism; IMP biosynthesis via de novo pathway; 5-amino-1-(5-phospho-D-ribosyl)imidazole-4-carboxamide from 5-amino-1-(5-phospho-D-ribosyl)imidazole-4-carboxylate: step 1/2. The sequence is that of Phosphoribosylaminoimidazole-succinocarboxamide synthase from Pseudomonas putida (strain GB-1).